Here is a 224-residue protein sequence, read N- to C-terminus: Urease accessory protein UreF (224 aa).

This sequence belongs to the UreF family. As to quaternary structure, ureD, UreF and UreG form a complex that acts as a GTP-hydrolysis-dependent molecular chaperone, activating the urease apoprotein by helping to assemble the nickel containing metallocenter of UreC. The UreE protein probably delivers the nickel.

The protein resides in the cytoplasm. Its function is as follows. Required for maturation of urease via the functional incorporation of the urease nickel metallocenter. The sequence is that of Urease accessory protein UreF from Pseudomonas fluorescens (strain ATCC BAA-477 / NRRL B-23932 / Pf-5).